Reading from the N-terminus, the 1767-residue chain is Trans-Golgi network-localized SYP41-interacting protein 1 (1767 aa).

Residues 1-72 form a disordered region; that stretch reads MHEKDDLPQD…LTTDDDDNDD (72 aa). The Cytoplasmic portion of the chain corresponds to 1–1748; the sequence is MHEKDDLPQD…RVLMSRPQAR (1748 aa). A compositionally biased stretch (acidic residues) spans 16–32; sequence IENDDESNGQEEEELDP. Coiled coils occupy residues 276-436, 493-516, 570-590, 684-805, and 845-1082; these read LSHL…MSTA, VRSLAEERKELTNVSQEYNRLKDL, KSNIRKELDDLSFSLKKMEET, VSNL…LQQS, and IQEV…LSSK. The span at 1177-1190 shows a compositional bias: polar residues; the sequence is DNSVNTEPENSQGS. The segment at 1177–1198 is disordered; that stretch reads DNSVNTEPENSQGSAADEDEIS. 4 coiled-coil regions span residues 1251–1310, 1362–1424, 1522–1542, and 1603–1630; these read NSSL…FQEN, IRDM…WHEK, LKKATEAESTTELELVKAKNE, and LAGSEKLVDKLSLRVKEFEEKLQTKAIQ. The helical; Anchor for type IV membrane protein transmembrane segment at 1749–1766 threads the bilayer; that stretch reads LGVMVYSLLLHLWLLASI. A topological domain (vesicular) is located at residue L1767.

Interacts with SYP41. As to expression, expressed ubiquitously in roots, leaves and flowers, and, to a lower extent, in stems.

It is found in the golgi apparatus. Its subcellular location is the trans-Golgi network membrane. In terms of biological role, tethering factor involved in vesicle fusion at the trans-Golgi network (TGN) thus being required for efficient protein trafficking to the vacuole. Implicated in resistance to salt and osmotic stresses. Modulates the cell morphology (e.g. epidermal cell file rotation (CFR) and cell expansion) in mature regions of roots and the base of hypocotyls as well as root skewing, a process leading to root movement within the soil in order to maximize anchorage and nutrient acquisition, probably by regulating microtubule stabilization independently of their orientation. This chain is Trans-Golgi network-localized SYP41-interacting protein 1, found in Arabidopsis thaliana (Mouse-ear cress).